The chain runs to 275 residues: ATP synthase subunit a (275 aa).

7 helical membrane passes run 46 to 66 (RLML…VIAM), 104 to 124 (FLPV…ASII), 135 to 155 (IGMP…VGIK), 166 to 186 (SIVV…IEFI), 204 to 224 (MLAG…FFFV), 231 to 251 (IFGV…LLVI), and 252 to 272 (FLQA…ALHA).

This sequence belongs to the ATPase A chain family. As to quaternary structure, F-type ATPases have 2 components, CF(1) - the catalytic core - and CF(0) - the membrane proton channel. CF(1) has five subunits: alpha(3), beta(3), gamma(1), delta(1), epsilon(1). CF(0) has three main subunits: a(1), b(2) and c(9-12). The alpha and beta chains form an alternating ring which encloses part of the gamma chain. CF(1) is attached to CF(0) by a central stalk formed by the gamma and epsilon chains, while a peripheral stalk is formed by the delta and b chains.

It localises to the cell membrane. Key component of the proton channel; it plays a direct role in the translocation of protons across the membrane. In Rhodococcus erythropolis (strain PR4 / NBRC 100887), this protein is ATP synthase subunit a.